The primary structure comprises 261 residues: Zinc import ATP-binding protein ZnuC (261 aa).

In terms of domain architecture, ABC transporter spans 6–221; it reads IRLEKVAVRF…PAFVELFGNN (216 aa). 38-45 is a binding site for ATP; the sequence is GPNGAGKT.

The protein belongs to the ABC transporter superfamily. Zinc importer (TC 3.A.1.15.5) family. As to quaternary structure, the complex is composed of two ATP-binding proteins (ZnuC), two transmembrane proteins (ZnuB) and a solute-binding protein (ZnuA).

It localises to the cell inner membrane. It catalyses the reaction Zn(2+)(out) + ATP(in) + H2O(in) = Zn(2+)(in) + ADP(in) + phosphate(in) + H(+)(in). Functionally, part of the ABC transporter complex ZnuABC involved in zinc import. Responsible for energy coupling to the transport system. The polypeptide is Zinc import ATP-binding protein ZnuC (Pseudomonas fluorescens (strain Pf0-1)).